A 764-amino-acid chain; its full sequence is Reticulon-1 (764 aa).

Disordered regions lie at residues 1–37 (MAAN…GGAL), 115–147 (PDIK…SGIE), 247–400 (LYNS…SEIE), and 455–475 (ESCD…DSPM). Residues 261 to 282 (VTISFTGMETTLQTEYPENQQG) show a composition bias toward polar residues. The span at 328-337 (EEQRKYKISE) shows a compositional bias: basic and acidic residues. In terms of domain architecture, Reticulon spans 578-764 (AIELLYWRDI…AKIPGTKQKE (187 aa)). A run of 2 helical transmembrane segments spans residues 607–627 (FSVV…TISF) and 696–716 (VLMW…LLIM).

The protein resides in the endoplasmic reticulum membrane. Its subcellular location is the nucleus. Inhibits amyloid precursor protein processing, probably by blocking BACE1 activity. This is Reticulon-1 from Xenopus tropicalis (Western clawed frog).